The primary structure comprises 272 residues: MNKAVIYTLPKGTYSEKATKKFLDYIDGDYKIDYCNSIYDVFERVDNNGLGVVPIENSIEGSVSLTQDLLLQFKDIKILGELALDIHHNLIGYDKNKIKTVISHPQALAQCRNYIKKHGWDVKAVESTAKAVKIVAESKDETLGAIGSKESAEHYNLKILDENIEDYKNNKTRFILIGKKVKFKYHPKNYKVSIVFELKEDKPGALYHILKEFAERNINLTRIESRPSKKRLGTYIFYIDFENNKEKLEEILKSLERHTTFINLLGKYPVFD.

One can recognise a Prephenate dehydratase domain in the interval 4-179; that stretch reads AVIYTLPKGT…NKTRFILIGK (176 aa). The region spanning 194–269 is the ACT domain; it reads IVFELKEDKP…TFINLLGKYP (76 aa).

Homodimer.

The enzyme catalyses prephenate + H(+) = 3-phenylpyruvate + CO2 + H2O. The protein operates within amino-acid biosynthesis; L-phenylalanine biosynthesis; phenylpyruvate from prephenate: step 1/1. Inhibited by L-phenylalanine but not by L-tyrosine or L-tryptophan. This chain is Prephenate dehydratase (pheA), found in Methanocaldococcus jannaschii (strain ATCC 43067 / DSM 2661 / JAL-1 / JCM 10045 / NBRC 100440) (Methanococcus jannaschii).